Consider the following 326-residue polypeptide: DnaJ homolog subfamily B member 6 (326 aa).

A J domain is found at 3–69; that stretch reads DYYEVLGVQK…KKRDIYDRFG (67 aa). A disordered region spans residues 249–326; the sequence is ALPFQPTNTR…KKKKSTKGSY (78 aa). Phosphoserine is present on S277.

Homooligomer.

Its subcellular location is the cytoplasm. The protein resides in the perinuclear region. The protein localises to the nucleus. Has a stimulatory effect on the ATPase activity of HSP70 in a dose-dependent and time-dependent manner and hence acts as a co-chaperone of HSP70. Plays an indispensable role in the organization of KRT8/KRT18 filaments. Acts as an endogenous molecular chaperone for neuronal proteins including huntingtin. Suppresses aggregation and toxicity of polyglutamine-containing, aggregation-prone proteins. Also reduces cellular toxicity and caspase-3 activity. The protein is DnaJ homolog subfamily B member 6 of Gallus gallus (Chicken).